The chain runs to 318 residues: Dihydroorotate dehydrogenase B (NAD(+)), catalytic subunit (318 aa).

Residues Ser19 and 43 to 44 (KT) each bind FMN. Substrate is bound by residues Lys43, 69-73 (NAMGL), and Asn125. Residue Asn125 participates in FMN binding. The active-site Nucleophile is Cys128. Residues Lys164 and Val192 each contribute to the FMN site. Residue 193 to 194 (NT) coordinates substrate. Residues Gly219, 247–248 (GG), and 269–270 (AT) each bind FMN.

It belongs to the dihydroorotate dehydrogenase family. Type 1 subfamily. Heterotetramer of 2 PyrK and 2 PyrD type B subunits. FMN serves as cofactor.

It is found in the cytoplasm. The enzyme catalyses (S)-dihydroorotate + NAD(+) = orotate + NADH + H(+). It participates in pyrimidine metabolism; UMP biosynthesis via de novo pathway; orotate from (S)-dihydroorotate (NAD(+) route): step 1/1. Catalyzes the conversion of dihydroorotate to orotate with NAD(+) as electron acceptor. The chain is Dihydroorotate dehydrogenase B (NAD(+)), catalytic subunit (pyrD) from Methanopyrus kandleri (strain AV19 / DSM 6324 / JCM 9639 / NBRC 100938).